Reading from the N-terminus, the 419-residue chain is eIF5-mimic protein 2 (419 aa).

Met-1 is modified (N-acetylmethionine). The span at Met-1–Arg-15 shows a compositional bias: polar residues. The interval Met-1–Arg-26 is disordered. Ser-12 carries the post-translational modification Phosphoserine. Residues Asn-247–Glu-414 form the W2 domain. Lys-368 is covalently cross-linked (Glycyl lysine isopeptide (Lys-Gly) (interchain with G-Cter in SUMO2)). Phosphoserine is present on residues Ser-411 and Ser-413.

This sequence belongs to the BZW family.

In terms of biological role, translation initiation regulator which represses repeat-associated non-AUG (RAN) initiated translation probably by acting as a competitive inhibitor of eukaryotic translation initiation factor 5 (EIF5) function. Enhances histone H4 gene transcription but does not seem to bind DNA directly. This chain is eIF5-mimic protein 2 (BZW1), found in Homo sapiens (Human).